The primary structure comprises 207 residues: Flavin-dependent thymidylate synthase (207 aa).

Residues 1 to 204 (MQITLLFHTP…KFIFEHCLHK (204 aa)) form the ThyX domain. Residues Ser50 and 74-76 (RHR) contribute to the FAD site. DUMP contacts are provided by residues 71–74 (EVAR), 84–86 (STR), and Lys143. Residues 74-84 (RHRHTSPSVKS) carry the ThyX motif motif. FAD contacts are provided by residues 159-161 (NAR) and Asn165. Arg170 is a binding site for dUMP. Arg170 serves as the catalytic Involved in ionization of N3 of dUMP, leading to its activation.

This sequence belongs to the thymidylate synthase ThyX family. As to quaternary structure, homotetramer. FAD is required as a cofactor.

The enzyme catalyses dUMP + (6R)-5,10-methylene-5,6,7,8-tetrahydrofolate + NADPH + H(+) = dTMP + (6S)-5,6,7,8-tetrahydrofolate + NADP(+). The protein operates within pyrimidine metabolism; dTTP biosynthesis. Its function is as follows. Catalyzes the reductive methylation of 2'-deoxyuridine-5'-monophosphate (dUMP) to 2'-deoxythymidine-5'-monophosphate (dTMP) while utilizing 5,10-methylenetetrahydrofolate (mTHF) as the methyl donor, and NADPH and FADH(2) as the reductant. The protein is Flavin-dependent thymidylate synthase of Campylobacter jejuni subsp. jejuni serotype O:2 (strain ATCC 700819 / NCTC 11168).